We begin with the raw amino-acid sequence, 591 residues long: V-type ATP synthase alpha chain (591 aa).

Residue 233 to 240 (GPFGAGKT) participates in ATP binding.

The protein belongs to the ATPase alpha/beta chains family.

The enzyme catalyses ATP + H2O + 4 H(+)(in) = ADP + phosphate + 5 H(+)(out). In terms of biological role, produces ATP from ADP in the presence of a proton gradient across the membrane. The V-type alpha chain is a catalytic subunit. The chain is V-type ATP synthase alpha chain from Streptococcus pyogenes serotype M18 (strain MGAS8232).